The sequence spans 214 residues: NADH-quinone oxidoreductase subunit C (214 aa).

This sequence belongs to the complex I 30 kDa subunit family. NDH-1 is composed of 14 different subunits. Subunits NuoB, C, D, E, F, and G constitute the peripheral sector of the complex.

It localises to the cell inner membrane. It carries out the reaction a quinone + NADH + 5 H(+)(in) = a quinol + NAD(+) + 4 H(+)(out). Functionally, NDH-1 shuttles electrons from NADH, via FMN and iron-sulfur (Fe-S) centers, to quinones in the respiratory chain. The immediate electron acceptor for the enzyme in this species is believed to be ubiquinone. Couples the redox reaction to proton translocation (for every two electrons transferred, four hydrogen ions are translocated across the cytoplasmic membrane), and thus conserves the redox energy in a proton gradient. This Francisella tularensis subsp. mediasiatica (strain FSC147) protein is NADH-quinone oxidoreductase subunit C.